The following is a 943-amino-acid chain: Isoleucine--tRNA ligase (943 aa).

Positions 59–69 (PYANGQIHLGH) match the 'HIGH' region motif. Residue glutamate 577 coordinates L-isoleucyl-5'-AMP. The short motif at 618–622 (KMSKS) is the 'KMSKS' region element. Lysine 621 serves as a coordination point for ATP. Zn(2+) is bound by residues cysteine 906, cysteine 909, cysteine 926, and cysteine 929.

It belongs to the class-I aminoacyl-tRNA synthetase family. IleS type 1 subfamily. Monomer. Zn(2+) serves as cofactor.

Its subcellular location is the cytoplasm. It carries out the reaction tRNA(Ile) + L-isoleucine + ATP = L-isoleucyl-tRNA(Ile) + AMP + diphosphate. Functionally, catalyzes the attachment of isoleucine to tRNA(Ile). As IleRS can inadvertently accommodate and process structurally similar amino acids such as valine, to avoid such errors it has two additional distinct tRNA(Ile)-dependent editing activities. One activity is designated as 'pretransfer' editing and involves the hydrolysis of activated Val-AMP. The other activity is designated 'posttransfer' editing and involves deacylation of mischarged Val-tRNA(Ile). The polypeptide is Isoleucine--tRNA ligase (Xanthomonas oryzae pv. oryzae (strain MAFF 311018)).